The chain runs to 1468 residues: Neuropathy target esterase sws (1468 aa).

Topologically, residues 1 to 34 (MDVLEMLRASASGSYNTIFSDAWCQYVSKQITAT) are lumenal. The chain crosses the membrane as a helical span at residues 35–55 (VYMYCALVMMSLLFIAWFLYF). Residues 56–1468 (KRMARLRLRD…RSSPNNETKN (1413 aa)) lie on the Cytoplasmic side of the membrane. 174–301 (IFGHFEKPVF…IRVIQVIMIR (128 aa)) is a binding site for a nucleoside 3',5'-cyclic phosphate. 2 stretches are compositionally biased toward polar residues: residues 332 to 348 (TMSGPINSQTSQSSRQA) and 357 to 366 (NQLNLMQSAA). The interval 332-411 (TMSGPINSQT…DGSFHGTTNL (80 aa)) is disordered. Phosphoserine occurs at positions 442 and 451. A nucleoside 3',5'-cyclic phosphate is bound by residues 480–607 (ELGL…VVRR) and 596–723 (IVLD…LSHR). The region spanning 950-1116 (LVLGGGGARG…VNNLPGHLWR (167 aa)) is the PNPLA domain. The GXGXXG motif lies at 954-959 (GGGARG). A GXSXG motif is present at residues 981 to 985 (GVSIG). Serine 983 serves as the catalytic Nucleophile. Catalysis depends on aspartate 1103, which acts as the Proton acceptor. The DGA/G motif lies at 1103–1105 (DGG). Residue serine 1197 is modified to Phosphoserine. Residues 1368-1468 (ERKMDKSTQS…RSSPNNETKN (101 aa)) form a disordered region. The span at 1374–1383 (STQSSPPTSS) shows a compositional bias: low complexity. Basic and acidic residues predominate over residues 1385–1395 (TDMRGKEEAKH). The segment covering 1419-1441 (TQTGQEQELQQQQKLQQLQQDQG) has biased composition (low complexity). Over residues 1446-1459 (QLVDKDKEEDKENR) the composition is skewed to basic and acidic residues.

It belongs to the NTE family. In terms of assembly, interacts with Pka-C3; interaction inhibits the catalytic function of Pka-C3 and the esterase activity of sws.

It is found in the endoplasmic reticulum membrane. It catalyses the reaction a 1-acyl-sn-glycero-3-phosphocholine + H2O = sn-glycerol 3-phosphocholine + a fatty acid + H(+). Phospholipase B that deacylates intracellular phosphatidylcholine (PtdCho), generating glycerophosphocholine (GroPtdCho). This deacylation occurs at both sn-2 and sn-1 positions of PtdCho. Its specific chemical modification by certain organophosphorus (OP) compounds leads to distal axonopathy. Plays a role in the signaling mechanism between neurons and glia that regulates glia wrapping during development of the adult brain. Essential for membrane lipid homeostasis and cell survival in both neurons and glia of the adult brain. The protein is Neuropathy target esterase sws of Drosophila sechellia (Fruit fly).